Here is a 165-residue protein sequence, read N- to C-terminus: Crossover junction endodeoxyribonuclease RuvC (165 aa).

Catalysis depends on residues aspartate 7, glutamate 67, and aspartate 140. Residues aspartate 7, glutamate 67, and aspartate 140 each coordinate Mg(2+).

This sequence belongs to the RuvC family. Homodimer which binds Holliday junction (HJ) DNA. The HJ becomes 2-fold symmetrical on binding to RuvC with unstacked arms; it has a different conformation from HJ DNA in complex with RuvA. In the full resolvosome a probable DNA-RuvA(4)-RuvB(12)-RuvC(2) complex forms which resolves the HJ. Mg(2+) is required as a cofactor.

The protein localises to the cytoplasm. It catalyses the reaction Endonucleolytic cleavage at a junction such as a reciprocal single-stranded crossover between two homologous DNA duplexes (Holliday junction).. Its function is as follows. The RuvA-RuvB-RuvC complex processes Holliday junction (HJ) DNA during genetic recombination and DNA repair. Endonuclease that resolves HJ intermediates. Cleaves cruciform DNA by making single-stranded nicks across the HJ at symmetrical positions within the homologous arms, yielding a 5'-phosphate and a 3'-hydroxyl group; requires a central core of homology in the junction. The consensus cleavage sequence is 5'-(A/T)TT(C/G)-3'. Cleavage occurs on the 3'-side of the TT dinucleotide at the point of strand exchange. HJ branch migration catalyzed by RuvA-RuvB allows RuvC to scan DNA until it finds its consensus sequence, where it cleaves and resolves the cruciform DNA. The sequence is that of Crossover junction endodeoxyribonuclease RuvC from Caldanaerobacter subterraneus subsp. tengcongensis (strain DSM 15242 / JCM 11007 / NBRC 100824 / MB4) (Thermoanaerobacter tengcongensis).